A 131-amino-acid chain; its full sequence is UPF0102 protein H16_A3579 (131 aa).

Belongs to the UPF0102 family.

The polypeptide is UPF0102 protein H16_A3579 (Cupriavidus necator (strain ATCC 17699 / DSM 428 / KCTC 22496 / NCIMB 10442 / H16 / Stanier 337) (Ralstonia eutropha)).